Reading from the N-terminus, the 194-residue chain is 3-isopropylmalate dehydratase small subunit (194 aa).

It belongs to the LeuD family. LeuD type 1 subfamily. As to quaternary structure, heterodimer of LeuC and LeuD.

The enzyme catalyses (2R,3S)-3-isopropylmalate = (2S)-2-isopropylmalate. The protein operates within amino-acid biosynthesis; L-leucine biosynthesis; L-leucine from 3-methyl-2-oxobutanoate: step 2/4. Its function is as follows. Catalyzes the isomerization between 2-isopropylmalate and 3-isopropylmalate, via the formation of 2-isopropylmaleate. The polypeptide is 3-isopropylmalate dehydratase small subunit (Anoxybacillus flavithermus (strain DSM 21510 / WK1)).